The sequence spans 763 residues: Phosphoglycerol transferase I (763 aa).

4 helical membrane passes run 1 to 21, 26 to 46, 77 to 97, and 108 to 128; these read MSEL…AWKA, WWFA…ITLF, ILPG…LGWI, and FGYS…SPAF.

This sequence belongs to the OpgB family.

It localises to the cell inner membrane. The catalysed reaction is a phosphatidylglycerol + a membrane-derived-oligosaccharide D-glucose = a 1,2-diacyl-sn-glycerol + a membrane-derived-oligosaccharide 6-(glycerophospho)-D-glucose.. It functions in the pathway glycan metabolism; osmoregulated periplasmic glucan (OPG) biosynthesis. Transfers a phosphoglycerol residue from phosphatidylglycerol to the membrane-bound nascent glucan backbones. This Escherichia coli (strain SMS-3-5 / SECEC) protein is Phosphoglycerol transferase I.